The chain runs to 179 residues: Large ribosomal subunit protein uL6 (179 aa).

The protein belongs to the universal ribosomal protein uL6 family. In terms of assembly, part of the 50S ribosomal subunit.

This protein binds to the 23S rRNA, and is important in its secondary structure. It is located near the subunit interface in the base of the L7/L12 stalk, and near the tRNA binding site of the peptidyltransferase center. This chain is Large ribosomal subunit protein uL6, found in Synechococcus sp. (strain RCC307).